Here is a 359-residue protein sequence, read N- to C-terminus: Histidinol-phosphate aminotransferase (359 aa).

K217 is modified (N6-(pyridoxal phosphate)lysine).

This sequence belongs to the class-II pyridoxal-phosphate-dependent aminotransferase family. Histidinol-phosphate aminotransferase subfamily. In terms of assembly, homodimer. It depends on pyridoxal 5'-phosphate as a cofactor.

The catalysed reaction is L-histidinol phosphate + 2-oxoglutarate = 3-(imidazol-4-yl)-2-oxopropyl phosphate + L-glutamate. The protein operates within amino-acid biosynthesis; L-histidine biosynthesis; L-histidine from 5-phospho-alpha-D-ribose 1-diphosphate: step 7/9. The polypeptide is Histidinol-phosphate aminotransferase (Salmonella paratyphi A (strain ATCC 9150 / SARB42)).